The sequence spans 260 residues: Carbonic anhydrase 3 (260 aa).

Ala-2 is subject to N-acetylalanine. Residues 3-259 (KEWGYASHNG…IKGRVVRASF (257 aa)) form the Alpha-carbonic anhydrase domain. 5 positions are modified to phosphoserine: Ser-29, Ser-43, Ser-48, Ser-50, and Ser-55. Residues 64–67 (KTCR) form an involved in proton transfer region. Thr-73 carries the phosphothreonine modification. Positions 94, 96, and 119 each coordinate Zn(2+). Tyr-127 bears the Phosphotyrosine mark. Residue Thr-129 is modified to Phosphothreonine. Cys-182 and Cys-187 each carry S-glutathionyl cysteine. 198 to 199 (TT) contacts substrate. Position 216 is a phosphothreonine (Thr-216). At Ser-219 the chain carries Phosphoserine.

The protein belongs to the alpha-carbonic anhydrase family. Requires Zn(2+) as cofactor. S-thiolated both by thiol-disulfide exchange with glutathione disulfide and by oxyradical-initiated S-thiolation with reduced glutathione. In terms of processing, S-glutathionylated in hepatocytes under oxidative stress. As to expression, expressed in liver and muscle.

Its subcellular location is the cytoplasm. The catalysed reaction is hydrogencarbonate + H(+) = CO2 + H2O. With respect to regulation, inhibited by acetazolamide. In terms of biological role, reversible hydration of carbon dioxide. This chain is Carbonic anhydrase 3 (Ca3), found in Rattus norvegicus (Rat).